The primary structure comprises 202 residues: ATP-dependent Clp protease proteolytic subunit (202 aa).

Ser106 serves as the catalytic Nucleophile. His131 is a catalytic residue.

It belongs to the peptidase S14 family. In terms of assembly, fourteen ClpP subunits assemble into 2 heptameric rings which stack back to back to give a disk-like structure with a central cavity, resembling the structure of eukaryotic proteasomes.

It is found in the cytoplasm. It carries out the reaction Hydrolysis of proteins to small peptides in the presence of ATP and magnesium. alpha-casein is the usual test substrate. In the absence of ATP, only oligopeptides shorter than five residues are hydrolyzed (such as succinyl-Leu-Tyr-|-NHMec, and Leu-Tyr-Leu-|-Tyr-Trp, in which cleavage of the -Tyr-|-Leu- and -Tyr-|-Trp bonds also occurs).. Functionally, cleaves peptides in various proteins in a process that requires ATP hydrolysis. Has a chymotrypsin-like activity. Plays a major role in the degradation of misfolded proteins. The sequence is that of ATP-dependent Clp protease proteolytic subunit from Variovorax paradoxus (strain S110).